Consider the following 255-residue polypeptide: Pyridoxine 5'-phosphate synthase (255 aa).

Asn12 is a binding site for 3-amino-2-oxopropyl phosphate. 14-15 (DH) lines the 1-deoxy-D-xylulose 5-phosphate pocket. Arg23 provides a ligand contact to 3-amino-2-oxopropyl phosphate. The active-site Proton acceptor is His48. 1-deoxy-D-xylulose 5-phosphate contacts are provided by Arg50 and His55. The active-site Proton acceptor is the Glu75. Thr105 provides a ligand contact to 1-deoxy-D-xylulose 5-phosphate. Residue His199 is the Proton donor of the active site. Residues Gly200 and 221–222 (GF) contribute to the 3-amino-2-oxopropyl phosphate site.

It belongs to the PNP synthase family. Homooctamer; tetramer of dimers.

The protein resides in the cytoplasm. It catalyses the reaction 3-amino-2-oxopropyl phosphate + 1-deoxy-D-xylulose 5-phosphate = pyridoxine 5'-phosphate + phosphate + 2 H2O + H(+). Its pathway is cofactor biosynthesis; pyridoxine 5'-phosphate biosynthesis; pyridoxine 5'-phosphate from D-erythrose 4-phosphate: step 5/5. Functionally, catalyzes the complicated ring closure reaction between the two acyclic compounds 1-deoxy-D-xylulose-5-phosphate (DXP) and 3-amino-2-oxopropyl phosphate (1-amino-acetone-3-phosphate or AAP) to form pyridoxine 5'-phosphate (PNP) and inorganic phosphate. This chain is Pyridoxine 5'-phosphate synthase, found in Rhodopseudomonas palustris (strain BisB18).